A 4303-amino-acid polypeptide reads, in one-letter code: Polycystin-1 (4303 aa).

The N-terminal stretch at 1–23 is a signal peptide; it reads MPPAAPARLALALGLGLWLGALA. Residues 24–67 enclose the LRRNT domain; the sequence is GGPGRGCGPCEPPCLCGPAPGAACRVNCSGRGLRTLGPALRIPA. Over 24–3074 the chain is Extracellular; the sequence is GGPGRGCGPC…VFPEPTADVN (3051 aa). N-linked (GlcNAc...) asparagine glycosylation is found at Asn50 and Asn89. LRR repeat units follow at residues 68-91 and 92-113; these read DATA…ANLS and ALAE…IFAN. N-linked (GlcNAc...) asparagine glycans are attached at residues Asn116 and Asn121. The 54-residue stretch at 125–178 folds into the LRRCT domain; it reads NPFECDCGLAWLPRWAEEQQVRVVQPEAATCAGPGSLAGQPLLGIPLLDSGCGE. The region spanning 177–271 is the WSC domain; it reads GEEYVACLPD…PTLLQHVFPA (95 aa). Residue Asn187 is glycosylated (N-linked (GlcNAc...) asparagine). The PKD 1 domain maps to 272–359; sequence SPGATLVGPH…VQVEAAPAAL (88 aa). Positions 415–531 constitute a C-type lectin domain; that stretch reads GNGHCYRLVV…CSAPHSYVCE (117 aa). 2 disulfides stabilise this stretch: Cys436-Cys530 and Cys508-Cys522. Positions 616–635 are disordered; it reads AGTPENGSEPESRSPDNRTQ. N-linked (GlcNAc...) asparagine glycans are attached at residues Asn621 and Asn632. Residues 638–671 enclose the LDL-receptor class A; atypical domain; that stretch reads PACMPGGRWCPGANICLPLDASCHPQACANGCTS. 3 disulfides stabilise this stretch: Cys640–Cys653, Cys647–Cys665, and Cys660–Cys669. Positions 743-817 constitute a PKD 2 domain; it reads LSANASSWLP…RHNLSCSFDV (75 aa). Asn746, Asn810, Asn841, Asn854, Asn890, Asn921, Asn1004, Asn1010, Asn1034, Asn1072, Asn1113, Asn1178, Asn1194, Asn1240, Asn1269, Asn1336, Asn1348, Asn1382, Asn1450, Asn1455, Asn1474, Asn1518, Asn1541, Asn1554, Asn1563, Asn1647, Asn1661, Asn1733, Asn1791, Asn1834, Asn1867, and Asn1880 each carry an N-linked (GlcNAc...) asparagine glycan. PKD domains lie at 855–928, 935–1020, 1023–1129, 1127–1215, 1213–1298, 1294–1383, 1382–1469, 1468–1551, 1550–1635, 1634–1721, 1719–1805, 1807–1890, 1889–1974, 1977–2057, and 2060–2148; these read ATAT…RVTA, LRAT…NRMQ, QVST…LPSV, PSVA…LRGL, RGLS…EVLR, LEVL…VGNV, NVTL…VLVT, VTSI…VRGL, GLVV…IEGL, GLQV…VGWL, GWLM…VSGL, IRAS…IVGL, GLVL…VSGL, PNCC…VLEV, and AVQY…ACRE. N-linked (GlcNAc...) asparagine glycans are attached at residues Asn1991, Asn2050, Asn2074, Asn2125, Asn2248, Asn2353, Asn2395, Asn2412, Asn2567, Asn2578, Asn2645, Asn2718, Asn2754, Asn2841, Asn2878, Asn2925, Asn2956, and Asn2994. In terms of domain architecture, REJ spans 2146-2833; the sequence is CREPEVDVVL…QLIFLVDSNP (688 aa). The GAIN-B domain occupies 2862 to 3063; that stretch reads PIERLASERA…SLFVPPSHVR (202 aa). Cys3015 and Cys3043 form a disulfide bridge. The GPS stretch occupies residues 3015–3063; sequence CQYFSEEDMVWRTEGLLPLEETSPRQAVCLTRHLTAFGASLFVPPSHVR. A helical membrane pass occupies residues 3075–3095; the sequence is YIVMLTCAVCLVTYMVMAAIL. Topologically, residues 3096 to 3277 are cytoplasmic; the sequence is HKLDQLDASR…DRPPRSRFTR (182 aa). The PLAT domain maps to 3118–3233; it reads FKYEILVKTG…EANGGLVEKE (116 aa). A helical transmembrane segment spans residues 3278 to 3298; the sequence is IQRATCCVLLICLFLGANAVW. The Extracellular portion of the chain corresponds to 3299 to 3323; it reads YGAVGDSAYSTGHVSRLSPLSVDTV. The helical transmembrane segment at 3324-3344 threads the bilayer; that stretch reads AVGLVSSVVVYPVYLAILFLF. At 3345-3559 the chain is on the cytoplasmic side; sequence RMSRSKVAGS…LPAWCASLAH (215 aa). The helical transmembrane segment at 3560 to 3580 threads the bilayer; that stretch reads GLSLLLVAVAVAVSGWVGASF. Residues 3581 to 3582 lie on the Extracellular side of the membrane; sequence PP. The helical transmembrane segment at 3583 to 3603 threads the bilayer; sequence GVSVAWLLSSSASFLASFLGW. The Cytoplasmic portion of the chain corresponds to 3604–3665; it reads EPLKVLLEAL…LAKEEARKVK (62 aa). A helical membrane pass occupies residues 3666–3686; it reads RLHGMLRSLLVYMLFLLVTLL. The Extracellular segment spans residues 3687 to 3901; it reads ASYGDASCHG…RLSAGLSLPL (215 aa). N-linked (GlcNAc...) asparagine glycans are attached at residues Asn3738, Asn3790, and Asn3845. Residues 3902–3922 traverse the membrane as a helical segment; that stretch reads LTSVCLLLFAVHFAVAEARTW. Over 3923–3935 the chain is Cytoplasmic; the sequence is HREGRWRVLRLGA. A helical membrane pass occupies residues 3936–3956; sequence WARWLLVALTAATALVRLAQL. Residues 3957–3984 are Extracellular-facing; that stretch reads GAADRQWTRFVRGRPRRFTSFDQVAQLS. A helical membrane pass occupies residues 3985 to 4005; that stretch reads SAARGLAASLLFLLLVKAAQQ. Residues 4006–4027 lie on the Cytoplasmic side of the membrane; sequence LRFVRQWSVFGKTLCRALPELL. Residues 4028–4048 form a helical membrane-spanning segment; it reads GVTLGLVVLGVAYAQLAILLV. Topologically, residues 4049–4090 are extracellular; it reads SSCVDSLWSVAQALLVLCPGTGLSTLCPAESWHLSPLLCVGL. The chain crosses the membrane as a helical span at residues 4091–4110; that stretch reads WALRLWGALRLGAVILRWRY. Residues 4111 to 4303 lie on the Cytoplasmic side of the membrane; that stretch reads HALRGELYRP…AKNKVHPSST (193 aa). Disordered regions lie at residues 4160 to 4196 and 4243 to 4303; these read PLPS…QLDG and LHSL…PSST. Phosphoserine; by PRKX; in vitro is present on Ser4166. A compositionally biased stretch (polar residues) spans 4185-4195; that stretch reads SHPSTSSSQLD. A coiled-coil region spans residues 4220–4251; the sequence is EALLTQFDRLNQATEDVYQLEQQLHSLQGRRS. Residues 4253–4269 are compositionally biased toward low complexity; it reads RAPAGSSRGPSPGLRPA. A compositionally biased stretch (basic residues) spans 4292 to 4303; it reads LRAKNKVHPSST.

The protein belongs to the polycystin family. As to quaternary structure, component of the heterotetrameric polycystin channel complex with PKD2; the tetramer contains one PKD1 chain and three PKD2 chains. Interacts with PKD2; the interaction is required for ciliary localization. Interacts with PKD2L1. Interacts with PRKX; involved in differentiation and controlled morphogenesis of the kidney. Interacts (via extracellular domain) with WNT3A, WNT4, WNT5A and WNT9B. Interacts with DVL1 and DVL2. Interacts with NPHP1 (via SH3 domain). Interacts with BBS1, BBS4, BBS5 and TTC8. Interacts with RGS7. Interacts (via the PKD repeats in the N-terminal extracellular region) with EPCIP; the interaction is not dependent on N-glycosylation of either protein. N-glycosylated. Post-translationally, after synthesis, undergoes cleavage between Leu-3048 and Thr-3049 in the GPS region of the GAIN-B domain. Cleavage at the GPS region occurs through a cis-autoproteolytic mechanism involving an ester-intermediate via N-O acyl rearrangement. This process takes place in the early secretory pathway, depends on initial N-glycosylation, and requires the REJ domain. There is evidence that cleavage at GPS region is incomplete. Uncleaved and cleaved products may have different functions in vivo.

The protein resides in the cell membrane. The protein localises to the cell projection. It localises to the cilium. Its subcellular location is the endoplasmic reticulum. It is found in the golgi apparatus. The protein resides in the vesicle. The protein localises to the secreted. It localises to the extracellular exosome. Functionally, component of a heteromeric calcium-permeable ion channel formed by PKD1 and PKD2 that is activated by interaction between PKD1 and a Wnt family member, such as WNT3A and WNT9B. Both PKD1 and PKD2 are required for channel activity. Involved in renal tubulogenesis. Involved in fluid-flow mechanosensation by the primary cilium in renal epithelium. Acts as a regulator of cilium length, together with PKD2. The dynamic control of cilium length is essential in the regulation of mechanotransductive signaling. The cilium length response creates a negative feedback loop whereby fluid shear-mediated deflection of the primary cilium, which decreases intracellular cAMP, leads to cilium shortening and thus decreases flow-induced signaling. May be an ion-channel regulator. Involved in adhesive protein-protein and protein-carbohydrate interactions. Likely to be involved with polycystin-1-interacting protein 1 in the detection, sequestration and exocytosis of senescent mitochondria. The protein is Polycystin-1 of Homo sapiens (Human).